The sequence spans 397 residues: Mannonate dehydratase (397 aa).

It belongs to the mannonate dehydratase family. Requires Fe(2+) as cofactor. Mn(2+) serves as cofactor.

It catalyses the reaction D-mannonate = 2-dehydro-3-deoxy-D-gluconate + H2O. Its pathway is carbohydrate metabolism; pentose and glucuronate interconversion. Its function is as follows. Catalyzes the dehydration of D-mannonate. The chain is Mannonate dehydratase from Yersinia pestis bv. Antiqua (strain Antiqua).